Reading from the N-terminus, the 433-residue chain is Malate synthase (433 aa).

16-17 (TS) serves as a coordination point for acetyl-CoA. Asp-52 serves as a coordination point for Mg(2+). Arg-84 lines the acetyl-CoA pocket. Residues Arg-84, Glu-158, and 191 to 192 (VD) contribute to the glyoxylate site. The Mg(2+) site is built by Glu-158 and Asp-192. Positions 236 and 259 each coordinate acetyl-CoA. Asp-388 (proton acceptor) is an active-site residue.

Belongs to the HpcH/HpaI aldolase family. As to quaternary structure, homotrimer and homohexamer in equilibrium. The cofactor is Mg(2+).

It localises to the cytoplasm. The catalysed reaction is glyoxylate + acetyl-CoA + H2O = (S)-malate + CoA + H(+). The protein operates within carbohydrate metabolism; glyoxylate cycle; (S)-malate from isocitrate: step 2/2. Involved in the glyoxylate cycle which synthesizes precursors for carbohydrates from C2 compounds such as acetate. Catalyzes the Claisen condensation between acetyl-coenzyme A (acetyl-CoA) and glyoxylate to form the malyl-CoA intermediate that is subsequently hydrolyzed to produce malate and CoA. The chain is Malate synthase (aceB) from Haloferax volcanii (strain ATCC 29605 / DSM 3757 / JCM 8879 / NBRC 14742 / NCIMB 2012 / VKM B-1768 / DS2) (Halobacterium volcanii).